Consider the following 337-residue polypeptide: Ornithine carbamoyltransferase (337 aa).

Carbamoyl phosphate is bound by residues 57-60, Gln84, Arg108, and 135-138; these read STRT and HPTQ. Residues Asn167, Asp231, and 235 to 236 each bind L-ornithine; that span reads SM. Carbamoyl phosphate is bound by residues 272–273 and Arg317; that span reads CL.

It belongs to the aspartate/ornithine carbamoyltransferase superfamily. OTCase family.

The protein resides in the cytoplasm. It catalyses the reaction carbamoyl phosphate + L-ornithine = L-citrulline + phosphate + H(+). It functions in the pathway amino-acid degradation; L-arginine degradation via ADI pathway; carbamoyl phosphate from L-arginine: step 2/2. Functionally, reversibly catalyzes the transfer of the carbamoyl group from carbamoyl phosphate (CP) to the N(epsilon) atom of ornithine (ORN) to produce L-citrulline. The polypeptide is Ornithine carbamoyltransferase (Streptococcus equi subsp. equi (strain 4047)).